We begin with the raw amino-acid sequence, 204 residues long: Holliday junction branch migration complex subunit RuvA (204 aa).

The interval 1–64 (MIGHLTGRLV…EDAHLLFGFS (64 aa)) is domain I. Positions 65-143 (QKTDRTLFRE…GIQQEDFFIE (79 aa)) are domain II. The interval 144–155 (SQHLKQPEHALN) is flexible linker. Positions 156-204 (EQDIPASEAISALIALGYKAAEAEKLVKKISKPALSSEQLIREALKAAL) are domain III.

This sequence belongs to the RuvA family. Homotetramer. Forms an RuvA(8)-RuvB(12)-Holliday junction (HJ) complex. HJ DNA is sandwiched between 2 RuvA tetramers; dsDNA enters through RuvA and exits via RuvB. An RuvB hexamer assembles on each DNA strand where it exits the tetramer. Each RuvB hexamer is contacted by two RuvA subunits (via domain III) on 2 adjacent RuvB subunits; this complex drives branch migration. In the full resolvosome a probable DNA-RuvA(4)-RuvB(12)-RuvC(2) complex forms which resolves the HJ.

The protein resides in the cytoplasm. The RuvA-RuvB-RuvC complex processes Holliday junction (HJ) DNA during genetic recombination and DNA repair, while the RuvA-RuvB complex plays an important role in the rescue of blocked DNA replication forks via replication fork reversal (RFR). RuvA specifically binds to HJ cruciform DNA, conferring on it an open structure. The RuvB hexamer acts as an ATP-dependent pump, pulling dsDNA into and through the RuvAB complex. HJ branch migration allows RuvC to scan DNA until it finds its consensus sequence, where it cleaves and resolves the cruciform DNA. This Pasteurella multocida (strain Pm70) protein is Holliday junction branch migration complex subunit RuvA.